A 473-amino-acid chain; its full sequence is Reticulon-4 receptor (473 aa).

A signal peptide spans 1 to 26 (MKRASSGGSRLLAWVLWLQAWRVATP). Disulfide bonds link Cys-27–Cys-33 and Cys-31–Cys-43. One can recognise an LRRNT domain in the interval 27–57 (CPGACVCYNEPKVTTSCPQQGLQAVPTGIPA). LRR repeat units follow at residues 56–79 (PASS…SFQS), 80–103 (CRNL…AFTG), 105–128 (TLLE…TFRG), 129–152 (LGHL…LFRG), 153–176 (LAAL…TFRD), 178–200 (GNLT…AFRG), 202–224 (HSLD…AFRD), 225–248 (LGRL…VLVP), and 250–273 (RSLQ…PLWA). Asn-82 carries N-linked (GlcNAc...) asparagine glycosylation. The 51-residue stretch at 260–310 (NPWVCDCRARPLWAWLQKFRGSSSEVPCNLPQRLAGRDLKRLAASDLEGCA) folds into the LRRCT domain. 3 cysteine pairs are disulfide-bonded: Cys-264-Cys-287, Cys-266-Cys-335, and Cys-309-Cys-336. Residues 346-446 (VLEPGRPASA…GSSGTGDAEG (101 aa)) form a disordered region. Residue Asn-372 is glycosylated (N-linked (GlcNAc...) asparagine). The segment covering 413–429 (PRRRPGCSRKNRTRSHC) has biased composition (basic residues). A compositionally biased stretch (gly residues) spans 434 to 445 (AGSGSSGTGDAE). Residue Ser-447 is the site of GPI-anchor amidated serine attachment. Residues 448–473 (GALPALACSLAPLGLALVLWTVLGPC) constitute a propeptide, removed in mature form.

This sequence belongs to the Nogo receptor family. As to quaternary structure, homodimer. Interacts with MAG. Interacts with RTN4 and OMG. Interacts with LINGO1 and NGFR. Interacts with KIAA0319L. Interacts with OLFM1; this inhibits interaction with LINGO1 and NGFR. Post-translationally, N-glycosylated. O-glycosylated. Contains terminal sialic acid groups on its glycan chains. Detected in embryonic cerebellum, in spinal cord motor neurons and in dorsal root ganglia. Detected in adult brain, in neocortex, hippocampus, striatum, thalamus and dorsal root ganglion neurons (at protein level).

It is found in the cell membrane. The protein resides in the membrane raft. It localises to the cell projection. Its subcellular location is the dendrite. The protein localises to the perikaryon. It is found in the axon. Its function is as follows. Receptor for RTN4, OMG and MAG. Functions as a receptor for the sialylated gangliosides GT1b and GM1. Besides, functions as a receptor for chondroitin sulfate proteoglycans. Can also bind heparin. Intracellular signaling cascades are triggered via the coreceptor NGFR. Signaling mediates activation of Rho and downstream reorganization of the actin cytoskeleton. Mediates axonal growth inhibition. May play a role in regulating axon regeneration and neuronal plasticity in the adult central nervous system. Plays a role in postnatal brain development. Required for normal axon migration across the brain midline and normal formation of the corpus callosum. Protects motoneurons against apoptosis; protection against apoptosis is probably mediated via interaction with MAG. Acts in conjunction with RTN4 and LINGO1 in regulating neuronal precursor cell motility during cortical development. Like other family members, plays a role in restricting the number dendritic spines and the number of synapses that are formed during brain development. In Rattus norvegicus (Rat), this protein is Reticulon-4 receptor (Rtn4r).